Consider the following 550-residue polypeptide: Formin-binding protein 1-like (550 aa).

In terms of domain architecture, F-BAR spans 1–263; the sequence is MSWGTELWDQ…AAKSVDERRD (263 aa). Coiled-coil stretches lie at residues 66–258 and 334–426; these read FTSC…AKSV and LEDF…QRSE. Positions 339–416 constitute an REM-1 domain; the sequence is HLPPEQRRKR…IHKNEAWLSE (78 aa). Basic and acidic residues predominate over residues 423 to 432; sequence QRSERRHSAE. The tract at residues 423–467 is disordered; it reads QRSERRHSAEANHLVAQGRESPEGSYTEDANQEGRVQPQPHAHPE. Positions 479 to 540 constitute an SH3 domain; sequence PAIGHCKSLY…PTSYIDITLE (62 aa).

Belongs to the FNBP1 family. In terms of assembly, homodimerizes, the dimers can polymerize end-to-end to form filamentous structures. Interacts with GTP-bound cdc42 and wasl/n-wasp.

It is found in the cytoplasm. The protein localises to the cytoskeleton. The protein resides in the cell cortex. Its subcellular location is the cytoplasmic vesicle. It localises to the cell membrane. Its function is as follows. Required to coordinate membrane tubulation with reorganization of the actin cytoskeleton during endocytosis. Promotes cdc42-induced actin polymerization by activating the wasl-waspip complex, the predominant form of wasl/n-wasp in cells. Essential for autophagy of intracellular bacterial pathogens. The chain is Formin-binding protein 1-like (fnbp1l) from Xenopus tropicalis (Western clawed frog).